A 214-amino-acid polypeptide reads, in one-letter code: uncharacterized protein (214 aa).

A run of 2 helical transmembrane segments spans residues 23–43 (ILVGACAAVWLVFTGVSVAAA) and 65–85 (VLYAVIVVSALVIVGAIPVLL). The disordered stretch occupies residues 96-115 (ATRPTGASVRGGRSIGSGHP). 2 helical membrane passes run 152–172 (VVLTSAIGIALIAVAAATYLM) and 181–201 (WISYGLAGVVTAGMPVIEWLY).

It localises to the cell membrane. This is an uncharacterized protein from Mycobacterium tuberculosis (strain CDC 1551 / Oshkosh).